The primary structure comprises 157 residues: C-type lectin 9a (157 aa).

Residues 1–23 form the signal peptide; sequence MGRFIFVSFGLLVVFLSLSGTGA. Intrachain disulfides connect C27–C38, C55–C151, and C126–C143. One can recognise a C-type lectin domain in the interval 34–152; sequence YDQYCYKPFN…CQAKKPFVCK (119 aa).

The protein belongs to the snaclec family. Heteromultimer; disulfide-linked. As to expression, expressed by the venom gland.

It is found in the secreted. Functionally, interferes with one step of hemostasis (modulation of platelet aggregation, or coagulation cascade, for example). The protein is C-type lectin 9a of Crotalus adamanteus (Eastern diamondback rattlesnake).